The chain runs to 459 residues: Vitamin K-dependent protein C (459 aa).

Residues 1 to 18 form the signal peptide; sequence MWQLASLLLLLIIWAVSS. Residues 19 to 41 constitute a propeptide that is removed on maturation; the sequence is TPVPPDSVFSSSQRAHQMLRSKR. The Gla domain occupies 42–87; sequence ANSFLEELRPSSLERECKEETCDFEEAREIFQNTENTMAFWSKYHD. Residues glutamate 47, glutamate 48, glutamate 55, glutamate 57, glutamate 60, glutamate 61, glutamate 66, glutamate 67, glutamate 70, and glutamate 76 each carry the 4-carboxyglutamate modification. Cysteines 58 and 63 form a disulfide. 4 disulfides stabilise this stretch: cysteine 91/cysteine 110, cysteine 100/cysteine 105, cysteine 104/cysteine 119, and cysteine 121/cysteine 130. EGF-like domains lie at 96 to 131 and 135 to 175; these read PEHL…RFCL and RFSN…LQCE. At aspartate 112 the chain carries (3R)-3-hydroxyaspartate. N-linked (GlcNAc...) asparagine glycosylation occurs at asparagine 138. Intrachain disulfides connect cysteine 139–cysteine 150, cysteine 146–cysteine 159, cysteine 161–cysteine 174, cysteine 182–cysteine 321, and cysteine 240–cysteine 256. The 235-residue stretch at 214–448 folds into the Peptidase S1 domain; that stretch reads LVNGKQSPWG…YLDWIHGHIR (235 aa). Histidine 255 (charge relay system) is an active-site residue. A glycan (N-linked (GlcNAc...) asparagine) is linked at asparagine 292. The Charge relay system role is filled by aspartate 301. An N-linked (GlcNAc...) asparagine glycan is attached at asparagine 353. 2 disulfide bridges follow: cysteine 371–cysteine 385 and cysteine 396–cysteine 424. Residue serine 400 is the Charge relay system of the active site.

This sequence belongs to the peptidase S1 family. Synthesized as a single chain precursor, which is cleaved into a light chain and a heavy chain held together by a disulfide bond. The enzyme is then activated by thrombin, which cleaves a tetradecapeptide from the amino end of the heavy chain; this reaction, which occurs at the surface of endothelial cells, is strongly promoted by thrombomodulin. Post-translationally, the vitamin K-dependent, enzymatic carboxylation of some Glu residues allows the modified protein to bind calcium. In terms of processing, the iron and 2-oxoglutarate dependent 3-hydroxylation of aspartate and asparagine is (R) stereospecific within EGF domains. As to expression, plasma; synthesized in the liver.

Its subcellular location is the secreted. It is found in the golgi apparatus. The protein resides in the endoplasmic reticulum. The enzyme catalyses Degradation of blood coagulation factors Va and VIIIa.. Its function is as follows. Protein C is a vitamin K-dependent serine protease that regulates blood coagulation by inactivating factors Va and VIIIa in the presence of calcium ions and phospholipids. Exerts a protective effect on the endothelial cell barrier function. The chain is Vitamin K-dependent protein C (PROC) from Sus scrofa (Pig).